The sequence spans 149 residues: Probable flagellum biosynthesis repressor protein FlbT (149 aa).

Belongs to the FlbT family.

Its function is as follows. Has a post-transcriptional repressor function in flagellum biogenesis. Associates with the 5'-UTR of fljK mRNA and promotes its degradation. The sequence is that of Probable flagellum biosynthesis repressor protein FlbT from Rhizobium etli (strain ATCC 51251 / DSM 11541 / JCM 21823 / NBRC 15573 / CFN 42).